We begin with the raw amino-acid sequence, 151 residues long: D-aminoacyl-tRNA deacylase (151 aa).

The Gly-cisPro motif, important for rejection of L-amino acids motif lies at 142 to 143 (GP).

It belongs to the DTD family. In terms of assembly, homodimer.

It is found in the cytoplasm. It carries out the reaction glycyl-tRNA(Ala) + H2O = tRNA(Ala) + glycine + H(+). The catalysed reaction is a D-aminoacyl-tRNA + H2O = a tRNA + a D-alpha-amino acid + H(+). In terms of biological role, an aminoacyl-tRNA editing enzyme that deacylates mischarged D-aminoacyl-tRNAs. Also deacylates mischarged glycyl-tRNA(Ala), protecting cells against glycine mischarging by AlaRS. Acts via tRNA-based rather than protein-based catalysis; rejects L-amino acids rather than detecting D-amino acids in the active site. By recycling D-aminoacyl-tRNA to D-amino acids and free tRNA molecules, this enzyme counteracts the toxicity associated with the formation of D-aminoacyl-tRNA entities in vivo and helps enforce protein L-homochirality. This is D-aminoacyl-tRNA deacylase from Psychrobacter cryohalolentis (strain ATCC BAA-1226 / DSM 17306 / VKM B-2378 / K5).